The sequence spans 157 residues: Cyclic pyranopterin monophosphate synthase (157 aa).

Substrate contacts are provided by residues 75-77 and 111-112; these read LCH and ME. Residue Asp126 is part of the active site.

The protein belongs to the MoaC family. As to quaternary structure, homohexamer; trimer of dimers.

The catalysed reaction is (8S)-3',8-cyclo-7,8-dihydroguanosine 5'-triphosphate = cyclic pyranopterin phosphate + diphosphate. Its pathway is cofactor biosynthesis; molybdopterin biosynthesis. Catalyzes the conversion of (8S)-3',8-cyclo-7,8-dihydroguanosine 5'-triphosphate to cyclic pyranopterin monophosphate (cPMP). The protein is Cyclic pyranopterin monophosphate synthase of Novosphingobium aromaticivorans (strain ATCC 700278 / DSM 12444 / CCUG 56034 / CIP 105152 / NBRC 16084 / F199).